The following is a 316-amino-acid chain: Acetyl-coenzyme A carboxylase carboxyl transferase subunit alpha (316 aa).

The region spanning 36-290 (KLEQKLDSLK…KQFLVEQLHI (255 aa)) is the CoA carboxyltransferase C-terminal domain.

Belongs to the AccA family. In terms of assembly, acetyl-CoA carboxylase is a heterohexamer composed of biotin carboxyl carrier protein (AccB), biotin carboxylase (AccC) and two subunits each of ACCase subunit alpha (AccA) and ACCase subunit beta (AccD).

Its subcellular location is the cytoplasm. The catalysed reaction is N(6)-carboxybiotinyl-L-lysyl-[protein] + acetyl-CoA = N(6)-biotinyl-L-lysyl-[protein] + malonyl-CoA. Its pathway is lipid metabolism; malonyl-CoA biosynthesis; malonyl-CoA from acetyl-CoA: step 1/1. Its function is as follows. Component of the acetyl coenzyme A carboxylase (ACC) complex. First, biotin carboxylase catalyzes the carboxylation of biotin on its carrier protein (BCCP) and then the CO(2) group is transferred by the carboxyltransferase to acetyl-CoA to form malonyl-CoA. This is Acetyl-coenzyme A carboxylase carboxyl transferase subunit alpha from Protochlamydia amoebophila (strain UWE25).